Reading from the N-terminus, the 425-residue chain is Histone-binding protein RBBP4 (425 aa).

Position 2 is an N-acetylalanine (Ala2). N6-acetyllysine; alternate is present on Lys4. Residue Lys4 forms a Glycyl lysine isopeptide (Lys-Gly) (interchain with G-Cter in SUMO2); alternate linkage. A Glycyl lysine isopeptide (Lys-Gly) (interchain with G-Cter in ubiquitin); alternate cross-link involves residue Lys4. WD repeat units lie at residues Tyr32–Gly125, Glu126–Gly175, His176–Phe223, Gly225–Asp270, Ala271–Glu314, Ser315–Gly371, and Gly372–Met404. Ser110 carries the phosphoserine modification. An N6-acetyllysine; alternate modification is found at Lys160. Residue Lys160 forms a Glycyl lysine isopeptide (Lys-Gly) (interchain with G-Cter in SUMO2); alternate linkage. A Phosphoserine modification is found at Ser355.

Belongs to the WD repeat RBAP46/RBAP48/MSI1 family. Binds directly to helix 1 of the histone fold of histone H4, a region that is not accessible when H4 is in chromatin. Subunit of the chromatin assembly factor 1 (CAF-1) complex, which is composed of RBBP4, CHAF1B and CHAF1A. Subunit of the core histone deacetylase (HDAC) complex, which is composed of HDAC1, HDAC2, RBBP4 and RBBP7. The core HDAC complex associates with SIN3A, ARID4B/SAP180, SAP18, SAP30, SAP130, SUDS3/SAP45 and possibly ARID4A/RBP1 and ING1 to form the SIN3 HDAC complex. Component of the nucleosome remodeling and deacetylase (NuRD) repressor complex, composed of core proteins MTA1, MTA2, MTA3, RBBP4, RBBP7, HDAC1, HDAC2, MBD2, MBD3, and peripherally associated proteins CDK2AP1, CDK2AP2, GATAD2A, GATAD2B, CHD3, CHD4 and CHD5. The exact stoichiometry of the NuRD complex is unknown, and some subunits such as MBD2 and MBD3, GATAD2A and GATAD2B, and CHD3, CHD4 and CHD5 define mutually exclusive NuRD complexes. Interacts with ZNF512B; the interaction is direct and may play a role in repressing gene expression. The NuRD complex may also interact with MBD3L1 and MBD3L2. Component of the PRC2 complex, which consists of the core subunits EED, EZH1 or EZH2, SUZ12, and RBBP4, and various combinations of accessory subunits including AEBP2, JARID2, PHF19, MTF2 and EPOP. Forms a monomeric PRC2.2 (class 2) complex consisting of at least SUZ12, RBBP4, AEBP2 and JARID2. Forms a dimeric PRC2.1 (class 1, PRC-PCL) complex consisting of at least SUZ12, RBBP4, and PHF19; PHF19 stabilizes the dimeric structure which enhances PRC2 interaction with chromatin. Component of the NURF-1 ISWI chromatin remodeling complex (also called the nucleosome-remodeling factor (NURF) complex) at least composed of SMARCA1 (isoform 2), BPTF, RBBP4 and RBBP7. Within the complex interacts with isoform 2 of SMARCA1. Component of the BPFT-SMARCA1 complex at least composed of SMARCA1 (isoform 1), BPFT, RBBP4 and RBBP7; the complex is catalytically inactive and does not remodel chromatin. Within the complex interacts with isoform 1 of SMARCA1. Interacts with the ISWI chromatin remodeling complex component SMARCA5; the interaction is direct. Interacts with the viral protein-binding domain of the retinoblastoma protein (RB1). Component of the DREAM complex (also named LINC complex) at least composed of E2F4, E2F5, LIN9, LIN37, LIN52, LIN54, MYBL1, MYBL2, RBL1, RBL2, RBBP4, TFDP1 and TFDP2. The complex exists in quiescent cells where it represses cell cycle-dependent genes. It dissociates in S phase when LIN9, LIN37, LIN52 and LIN54 form a subcomplex that binds to MYBL2. Found in a complex composed of at least SINHCAF, SIN3A, HDAC1, SAP30, RBBP4, OGT and TET1. Interacts with ZNF827; the interaction is direct and recruits RBBP4 to telomeres. Interacts with MTA1; the interaction is direct and mutually exclusive with binding histone H4. Interacts with ARMC12 (via ARM domains). Interacts with BRCA1. Interacts with CDK2AP1. Interacts with CREBBP, and this interaction may be enhanced by the binding of phosphorylated CREB1 to CREBBP. Interacts with ERCC6. Interacts with HDAC7. Interacts with PHF6. Interacts with PWWP2B. Interacts with SPEN/MINT. Interacts with SUV39H1.

The protein localises to the nucleus. The protein resides in the chromosome. It is found in the telomere. In terms of biological role, core histone-binding subunit that may target chromatin assembly factors, chromatin remodeling factors and histone deacetylases to their histone substrates in a manner that is regulated by nucleosomal DNA. Component of the chromatin assembly factor 1 (CAF-1) complex, which is required for chromatin assembly following DNA replication and DNA repair. Component of the core histone deacetylase (HDAC) complex, which promotes histone deacetylation and consequent transcriptional repression. Component of the nucleosome remodeling and histone deacetylase complex (the NuRD complex), which promotes transcriptional repression by histone deacetylation and nucleosome remodeling. Component of the PRC2 complex, which promotes repression of homeotic genes during development. Component of the NURF (nucleosome remodeling factor) complex. This is Histone-binding protein RBBP4 (RBBP4) from Pongo abelii (Sumatran orangutan).